The sequence spans 548 residues: Folylpolyglutamate synthase (548 aa).

An ATP-binding site is contributed by 130-133; sequence GKGS. Mg(2+) is bound by residues Ser-157, Glu-234, and His-262. Arg-382 and Asp-396 together coordinate ATP.

This sequence belongs to the folylpolyglutamate synthase family. A monovalent cation is required as a cofactor.

The protein resides in the mitochondrion inner membrane. The protein localises to the mitochondrion matrix. Its subcellular location is the cytoplasm. It carries out the reaction (6S)-5,6,7,8-tetrahydrofolyl-(gamma-L-Glu)(n) + L-glutamate + ATP = (6S)-5,6,7,8-tetrahydrofolyl-(gamma-L-Glu)(n+1) + ADP + phosphate + H(+). The protein operates within cofactor biosynthesis; tetrahydrofolylpolyglutamate biosynthesis. Catalyzes conversion of folates to polyglutamate derivatives allowing concentration of folate compounds in the cell and the intracellular retention of these cofactors, which are important substrates for most of the folate-dependent enzymes that are involved in one-carbon transfer reactions involved in purine, pyrimidine and amino acid synthesis. Required for methionine synthesis and maintenance of intact mitochondrial DNA. Involved in telomere maintenance. In Saccharomyces cerevisiae (strain AWRI796) (Baker's yeast), this protein is Folylpolyglutamate synthase.